The chain runs to 475 residues: Glutamyl-tRNA(Gln) amidotransferase subunit A (475 aa).

Residues Lys-76 and Ser-151 each act as charge relay system in the active site. Catalysis depends on Ser-175, which acts as the Acyl-ester intermediate.

Belongs to the amidase family. GatA subfamily. Heterotrimer of A, B and C subunits.

It carries out the reaction L-glutamyl-tRNA(Gln) + L-glutamine + ATP + H2O = L-glutaminyl-tRNA(Gln) + L-glutamate + ADP + phosphate + H(+). Its function is as follows. Allows the formation of correctly charged Gln-tRNA(Gln) through the transamidation of misacylated Glu-tRNA(Gln) in organisms which lack glutaminyl-tRNA synthetase. The reaction takes place in the presence of glutamine and ATP through an activated gamma-phospho-Glu-tRNA(Gln). The sequence is that of Glutamyl-tRNA(Gln) amidotransferase subunit A from Pelodictyon phaeoclathratiforme (strain DSM 5477 / BU-1).